A 283-amino-acid polypeptide reads, in one-letter code: 4-diphosphocytidyl-2-C-methyl-D-erythritol kinase (283 aa).

Lysine 10 is an active-site residue. Residue 99–109 (PMGGGLGGGSS) coordinates ATP. Aspartate 141 is a catalytic residue.

It belongs to the GHMP kinase family. IspE subfamily. In terms of assembly, homodimer.

It carries out the reaction 4-CDP-2-C-methyl-D-erythritol + ATP = 4-CDP-2-C-methyl-D-erythritol 2-phosphate + ADP + H(+). It functions in the pathway isoprenoid biosynthesis; isopentenyl diphosphate biosynthesis via DXP pathway; isopentenyl diphosphate from 1-deoxy-D-xylulose 5-phosphate: step 3/6. Its function is as follows. Catalyzes the phosphorylation of the position 2 hydroxy group of 4-diphosphocytidyl-2C-methyl-D-erythritol. This is 4-diphosphocytidyl-2-C-methyl-D-erythritol kinase from Escherichia coli O7:K1 (strain IAI39 / ExPEC).